We begin with the raw amino-acid sequence, 331 residues long: Adenosine deaminase (331 aa).

Zn(2+)-binding residues include H12 and H14. Substrate contacts are provided by H14, D16, and G170. Position 197 (H197) interacts with Zn(2+). E200 functions as the Proton donor in the catalytic mechanism. Residue D278 participates in Zn(2+) binding. D279 is a substrate binding site.

This sequence belongs to the metallo-dependent hydrolases superfamily. Adenosine and AMP deaminases family. Adenosine deaminase subfamily. Requires Zn(2+) as cofactor.

The enzyme catalyses adenosine + H2O + H(+) = inosine + NH4(+). It carries out the reaction 2'-deoxyadenosine + H2O + H(+) = 2'-deoxyinosine + NH4(+). In terms of biological role, catalyzes the hydrolytic deamination of adenosine and 2-deoxyadenosine. In Shewanella putrefaciens (strain CN-32 / ATCC BAA-453), this protein is Adenosine deaminase.